The chain runs to 211 residues: Adenylyl-sulfate kinase (211 aa).

Residue 36–43 participates in ATP binding; the sequence is GLSGSGKS. The active-site Phosphoserine intermediate is the Ser110.

This sequence belongs to the APS kinase family.

It carries out the reaction adenosine 5'-phosphosulfate + ATP = 3'-phosphoadenylyl sulfate + ADP + H(+). Its pathway is sulfur metabolism; hydrogen sulfide biosynthesis; sulfite from sulfate: step 2/3. Catalyzes the synthesis of activated sulfate. This is Adenylyl-sulfate kinase (cysC) from Buchnera aphidicola subsp. Schizaphis graminum (strain Sg).